Reading from the N-terminus, the 1154-residue chain is ATP-dependent RNA helicase DBP10 (1154 aa).

The disordered stretch occupies residues 16-58 (FAARTISATSKPNRNDATASSSKPQKRARRSTKGSDDDGNDDF). Polar residues predominate over residues 21–38 (ISATSKPNRNDATASSSK). The Q motif signature appears at 144-172 (GSFQSMGLHPSLLRSLLIRGFTTPTPIQR). The Helicase ATP-binding domain occupies 177 to 363 (AIMSQPPRDV…KAGLQANPKL (187 aa)). 190 to 197 (ARTGSGKT) lines the ATP pocket. Residues 311–314 (DEAD) carry the DEAD box motif. Disordered regions lie at residues 417–462 (QFNE…GPGG), 826–859 (IEGGGDAMEDDEEVTKPKVAARNKGKKKATAGKA), 885–939 (FDTT…PNFY), and 1043–1154 (MPKT…GASR). Residues 438–451 (RRAEFKGKTKDKHL) are compositionally biased toward basic and acidic residues. The 157-residue stretch at 446–602 (TKDKHLGNKR…SSHTAIAALA (157 aa)) folds into the Helicase C-terminal domain. Composition is skewed to basic residues over residues 844–855 (VAARNKGKKKAT) and 918–927 (RHTKRARTKK). Composition is skewed to basic and acidic residues over residues 1043 to 1061 (MPKTGEIESNNHRVHERSP) and 1098 to 1133 (AAKDEVKSARQIQKDRELKEKRREKNARPSKSDTNR). Over residues 1134–1154 (RAKRGAARRGRGGHGPRGASR) the composition is skewed to basic residues.

This sequence belongs to the DEAD box helicase family. DDX54/DBP10 subfamily.

Its subcellular location is the nucleus. It localises to the nucleolus. The catalysed reaction is ATP + H2O = ADP + phosphate + H(+). In terms of biological role, ATP-binding RNA helicase involved in the biogenesis of 60S ribosomal subunits and is required for the normal formation of 25S and 5.8S rRNAs. The chain is ATP-dependent RNA helicase DBP10 (DBP10) from Mycosarcoma maydis (Corn smut fungus).